Consider the following 409-residue polypeptide: Glycinol 4-dimethylallyltransferase (409 aa).

Residues Met1–Arg44 constitute a chloroplast transit peptide. 9 helical membrane-spanning segments follow: residues Leu113–Phe133, Leu148–Leu168, Val200–Trp220, Leu222–Leu242, Pro249–Phe269, Leu287–Ile307, Ala330–Ala350, His354–Tyr374, and Gly388–Ile408.

It belongs to the UbiA prenyltransferase family. Requires Mg(2+) as cofactor. Mn(2+) is required as a cofactor. It depends on Co(2+) as a cofactor.

Its subcellular location is the plastid. It is found in the chloroplast membrane. It carries out the reaction (6aS,11aS)-3,6a,9-trihydroxypterocarpan + dimethylallyl diphosphate = (6aS,11aS)-2-dimethylallyl-3,6a,9-trihydroxypterocarpan + diphosphate. It catalyses the reaction (6aS,11aS)-3,6a,9-trihydroxypterocarpan + dimethylallyl diphosphate = (6aS,11aS)-4-dimethylallyl-3,6a,9-trihydroxypterocarpan + diphosphate. Its pathway is phytoalexin biosynthesis; pterocarpan phytoalexin biosynthesis. In terms of biological role, proposed to be involved in the biosynthesis of pterocarpan phytoalexins, specifically glyceollins. Can act as a prenyltransferase towards glycinol which is the direct precursor of glyceollins. Seems to be specific for prenylation at C-4 thus producing glyceollin I. The protein is Glycinol 4-dimethylallyltransferase (G4DT) of Glycine max (Soybean).